We begin with the raw amino-acid sequence, 256 residues long: MLRIADKTFDSHLFTGTGKFASSQLMVEAIRASGSQLVTLAMKRVDLRQHNDAILEPLIAAGVTLLPNTSGAKTAEEAIFAAHLAREALGTNWLKLEIHPDARWLLPDPIETLKAAETLVQQGFVVLPYCGADPVLCKRLEEVGCAAVMPLGAPIGSNQGLETRAMLEIIIQQATVPVVVDAGIGVPSHAAQALEMGADAVLVNTAIAVADDPVNMAKAFRLAVEAGLLARQSGPGSRSYFAHATSPLTGFLEASA.

The active-site Schiff-base intermediate with DXP is Lys95. 1-deoxy-D-xylulose 5-phosphate-binding positions include Gly156, 182 to 183 (AG), and 204 to 205 (NT).

This sequence belongs to the ThiG family. Homotetramer. Forms heterodimers with either ThiH or ThiS.

The protein resides in the cytoplasm. The enzyme catalyses [ThiS sulfur-carrier protein]-C-terminal-Gly-aminoethanethioate + 2-iminoacetate + 1-deoxy-D-xylulose 5-phosphate = [ThiS sulfur-carrier protein]-C-terminal Gly-Gly + 2-[(2R,5Z)-2-carboxy-4-methylthiazol-5(2H)-ylidene]ethyl phosphate + 2 H2O + H(+). The protein operates within cofactor biosynthesis; thiamine diphosphate biosynthesis. Functionally, catalyzes the rearrangement of 1-deoxy-D-xylulose 5-phosphate (DXP) to produce the thiazole phosphate moiety of thiamine. Sulfur is provided by the thiocarboxylate moiety of the carrier protein ThiS. In vitro, sulfur can be provided by H(2)S. This Escherichia coli (strain K12 / MC4100 / BW2952) protein is Thiazole synthase.